Reading from the N-terminus, the 1087-residue chain is Error-prone DNA polymerase 2 (1087 aa).

Residues 1033–1064 (DGAFRPPTGRGDEFAHGSPGSADSRGKAPPGV) are disordered.

The protein belongs to the DNA polymerase type-C family. DnaE2 subfamily.

It localises to the cytoplasm. The enzyme catalyses DNA(n) + a 2'-deoxyribonucleoside 5'-triphosphate = DNA(n+1) + diphosphate. Functionally, DNA polymerase involved in damage-induced mutagenesis and translesion synthesis (TLS). It is not the major replicative DNA polymerase. The polypeptide is Error-prone DNA polymerase 2 (Rhizobium meliloti (strain 1021) (Ensifer meliloti)).